An 898-amino-acid chain; its full sequence is Alanine--tRNA ligase (898 aa).

Zn(2+)-binding residues include His589, His593, Cys693, and His697.

The protein belongs to the class-II aminoacyl-tRNA synthetase family. Zn(2+) serves as cofactor.

It localises to the cytoplasm. The enzyme catalyses tRNA(Ala) + L-alanine + ATP = L-alanyl-tRNA(Ala) + AMP + diphosphate. Functionally, catalyzes the attachment of alanine to tRNA(Ala) in a two-step reaction: alanine is first activated by ATP to form Ala-AMP and then transferred to the acceptor end of tRNA(Ala). Also edits incorrectly charged Ser-tRNA(Ala) and Gly-tRNA(Ala) via its editing domain. This Methanothermobacter thermautotrophicus (strain ATCC 29096 / DSM 1053 / JCM 10044 / NBRC 100330 / Delta H) (Methanobacterium thermoautotrophicum) protein is Alanine--tRNA ligase.